Consider the following 216-residue polypeptide: Guanylate kinase (216 aa).

A Guanylate kinase-like domain is found at 11-189 (GVLIVISGPS…AVKKIEAILL (179 aa)). 18-25 (GPSGAGKG) provides a ligand contact to ATP.

The protein belongs to the guanylate kinase family.

Its subcellular location is the cytoplasm. The enzyme catalyses GMP + ATP = GDP + ADP. Its function is as follows. Essential for recycling GMP and indirectly, cGMP. The polypeptide is Guanylate kinase (gmk) (Clostridium perfringens (strain 13 / Type A)).